The following is a 536-amino-acid chain: Aminopeptidase (536 aa).

The first 24 residues, 1 to 24, serve as a signal peptide directing secretion; sequence MSNKNNLRYALGALALSVSAASLA. The PA domain maps to 152 to 255; sequence AGDVTAKVVP…ATYDNGVAWS (104 aa). T196 carries the post-translational modification Phosphothreonine. Residues H296 and D308 each contribute to the Zn(2+) site. E340 functions as the Proton acceptor in the catalytic mechanism. Residues E341, D369, and H467 each coordinate Zn(2+). C465 and C470 are oxidised to a cystine.

The protein belongs to the peptidase M28 family. M28A subfamily. The cofactor is Zn(2+).

It localises to the secreted. The catalysed reaction is Release of an N-terminal amino acid, Xaa-|-Yaa-, in which Xaa is preferably Leu, but may be other amino acids including Pro although not Arg or Lys, and Yaa may be Pro. Amino acid amides and methyl esters are also readily hydrolyzed, but rates on arylamides are exceedingly low.. In terms of biological role, a secreted aminopeptidase. Acts on free N-terminal amino groups with a very strong preference for Leu in the first position. The protein is Aminopeptidase of Pseudomonas aeruginosa (strain UCBPP-PA14).